Here is a 127-residue protein sequence, read N- to C-terminus: E3 ubiquitin-protein ligase PPP1R11 (127 aa).

Disordered stretches follow at residues 1–55 and 70–127; these read MAEA…EHMG and AFGE…PMQH. N-acetylalanine is present on A2. Over residues 11 to 23 the composition is skewed to low complexity; sequence ETVTETTVTVTTE. Positions 40-55 are enriched in basic and acidic residues; the sequence is KKVEWSSDTVDNEHMG. The interval 53 to 63 is atypical RING finger domain 1; it reads HMGRRSSKCCC. Phosphoserine is present on residues S74 and S75. The residue at position 76 (T76) is a Phosphothreonine. S78 bears the Phosphoserine mark. The interval 86-95 is atypical RING finger domain 2; that stretch reads CGHTHCVRGH. Positions 90–100 are enriched in basic residues; it reads HCVRGHRKGRR. Residues 103-127 are compositionally biased toward pro residues; the sequence is TPGPTPTTPPQPPDPSQPPPGPMQH. Residue T110 is modified to Phosphothreonine.

Interacts with TLR2 and UBE2D2. Post-translationally, auto-ubiquitinated.

It catalyses the reaction S-ubiquitinyl-[E2 ubiquitin-conjugating enzyme]-L-cysteine + [acceptor protein]-L-lysine = [E2 ubiquitin-conjugating enzyme]-L-cysteine + N(6)-ubiquitinyl-[acceptor protein]-L-lysine.. It functions in the pathway protein modification; protein ubiquitination. Atypical E3 ubiquitin-protein ligase which ubiquitinates TLR2 at 'Lys-754' leading to its degradation by the proteasome. Plays a role in regulating inflammatory cytokine release and gram-positive bacterial clearance by functioning, in part, through the ubiquitination and degradation of TLR2. Inhibitor of protein phosphatase 1. This Rattus norvegicus (Rat) protein is E3 ubiquitin-protein ligase PPP1R11 (Ppp1r11).